A 294-amino-acid chain; its full sequence is Bifunctional protein FolD (294 aa).

Residues 166 to 168 (GRS), serine 191, and isoleucine 232 contribute to the NADP(+) site.

It belongs to the tetrahydrofolate dehydrogenase/cyclohydrolase family. Homodimer.

The catalysed reaction is (6R)-5,10-methylene-5,6,7,8-tetrahydrofolate + NADP(+) = (6R)-5,10-methenyltetrahydrofolate + NADPH. It catalyses the reaction (6R)-5,10-methenyltetrahydrofolate + H2O = (6R)-10-formyltetrahydrofolate + H(+). Its pathway is one-carbon metabolism; tetrahydrofolate interconversion. Functionally, catalyzes the oxidation of 5,10-methylenetetrahydrofolate to 5,10-methenyltetrahydrofolate and then the hydrolysis of 5,10-methenyltetrahydrofolate to 10-formyltetrahydrofolate. The chain is Bifunctional protein FolD from Afipia carboxidovorans (strain ATCC 49405 / DSM 1227 / KCTC 32145 / OM5) (Oligotropha carboxidovorans).